The sequence spans 220 residues: Fructose-6-phosphate aldolase 2 (220 aa).

Catalysis depends on Lys-85, which acts as the Schiff-base intermediate with substrate.

The protein belongs to the transaldolase family. Type 3A subfamily. In terms of assembly, homodecamer.

Its subcellular location is the cytoplasm. The enzyme catalyses beta-D-fructose 6-phosphate = dihydroxyacetone + D-glyceraldehyde 3-phosphate. Functionally, catalyzes the reversible formation of fructose 6-phosphate from dihydroxyacetone and D-glyceraldehyde 3-phosphate via an aldolization reaction. Can utilize hydroxyacetone as an alternative donor substrate. Is also able to catalyze the direct self-aldol addition of glycolaldehyde. Is less catalytically efficient than the isozyme FsaA. Does not display transaldolase activity. This is Fructose-6-phosphate aldolase 2 (fsaB) from Escherichia coli (strain K12).